The sequence spans 816 residues: Leucine--tRNA ligase (816 aa).

Residues 40 to 51 (SYPSGSQLHAGH) carry the 'HIGH' region motif. The 'KMSKS' region motif lies at 576–580 (KMSKS). Residue K579 coordinates ATP.

It belongs to the class-I aminoacyl-tRNA synthetase family.

Its subcellular location is the cytoplasm. It carries out the reaction tRNA(Leu) + L-leucine + ATP = L-leucyl-tRNA(Leu) + AMP + diphosphate. This is Leucine--tRNA ligase from Clostridium perfringens (strain 13 / Type A).